A 227-amino-acid polypeptide reads, in one-letter code: Cytosolic-abundant heat soluble protein 106094 (227 aa).

The tract at residues 1 to 28 is disordered; sequence MEAMNMNIPRDAMFVPPPESEQNGYHEK. Residues 90–140 are a coiled coil; that stretch reads VEEARRDYAAKTRENEMLGQQYEKELERKSEAYRKHQEVEADKIRKELEKQ. 2 CAHS motif regions span residues 122–140 and 159–177; these read YRKHQEVEADKIRKELEKQ and QKRMIDLECRYAKKDMDRE. The interval 198 to 227 is disordered; sequence LDSSAAGTESGGHVVSQSEKFTERNREMKR. Basic and acidic residues predominate over residues 217–227; the sequence is KFTERNREMKR.

The protein belongs to the Cytosolic-abundant heat soluble protein (CAHS) family.

It localises to the cytoplasm. In terms of biological role, CAHS proteins are cytosolic heat soluble proteins that seem to contribute to the anhydrobiosis in tardigrades, but their specific mechanisms are yet to be identified. It is possible that protection during anhydrobiosis might occur via the stabilization of vitrifying small molecules such as sugars, but not via the direct glass transition of CAHS proteins themselves. The protein is Cytosolic-abundant heat soluble protein 106094 of Paramacrobiotus richtersi (Water bear).